A 259-amino-acid polypeptide reads, in one-letter code: MIEARDLNVSIGGKRILSHVNFAAEPGIVTAIVGPNGSGKSTLIKTISGDLPYGGSITLNGQELARMKPAEAAMVRAVLPQSTTLSFPCTVREVVSLGIMRGYSAARDNCLPERALEKVDLAGFAGRFYQELSGGEQQRVQLARVLCQVWTPCLGQPRYLLLDEPVSSLDIKHQLIVLRIAREFAAAGGGVVAVLHDLNLTVAFAHHVVIMHQGRSVAGGTPEEVMQDALLSEVFDCQLKVGALPDGPTPFLLPQTAMV.

Residues 2-238 (IEARDLNVSI…ALLSEVFDCQ (237 aa)) enclose the ABC transporter domain. 34-41 (GPNGSGKS) provides a ligand contact to ATP.

It belongs to the ABC transporter superfamily. Heme (hemin) importer (TC 3.A.1.14.5) family. The complex is composed of two ATP-binding proteins (HmuV), two transmembrane proteins (HmuU) and a solute-binding protein (HmuT).

It localises to the cell inner membrane. Functionally, part of the ABC transporter complex HmuTUV involved in hemin import. Responsible for energy coupling to the transport system. The protein is Hemin import ATP-binding protein HmuV of Chelativorans sp. (strain BNC1).